The sequence spans 554 residues: Estrogen receptor beta (554 aa).

The modulating stretch occupies residues 25–173; that stretch reads TEIKNSPAGV…NPGSKKDAHF (149 aa). 2 consecutive NR C4-type zinc fingers follow at residues 174–194 and 210–234; these read CAVC…CEGC and CPAT…LRKC. A DNA-binding region (nuclear receptor) is located at residues 174–239; the sequence is CAVCSDYASG…RLRKCYEVGM (66 aa). One can recognise an NR LBD domain in the interval 289–521; that stretch reads SPEQFVLTLL…DLLLEMLNAH (233 aa). The disordered stretch occupies residues 529–554; that stretch reads PLATHPEFGPLEQMEPGESLRKGEPQ.

It belongs to the nuclear hormone receptor family. NR3 subfamily. As to quaternary structure, binds DNA as a homodimer. Can form a heterodimer with ER-alpha. In terms of tissue distribution, brain, pituitary, skeletal muscle, liver, adrenal, kidney, intestine and ovary.

The protein localises to the nucleus. Functionally, binds estrogens with an affinity similar to that of ER-alpha, and activates expression of reporter genes containing estrogen response elements (ERE) in an estrogen-dependent manner. Locally synthesized estrogens may act via ER beta, in addition to ER alpha, to mediate seasonal or developmental effects on nearby song nuclei. The protein is Estrogen receptor beta (ESR2) of Sturnus vulgaris (Starling).